Consider the following 423-residue polypeptide: Putative transmembrane protein ORF103 (423 aa).

A compositionally biased stretch (basic and acidic residues) spans 43–57 (EPKIEQEEPQQKPEV). The segment at 43–91 (EPKIEQEEPQQKPEVVDVYSNETDKNEEEVSIITSEDEEEDEKGMLFKR) is disordered. The span at 67–84 (KNEEEVSIITSEDEEEDE) shows a compositional bias: acidic residues. A run of 2 helical transmembrane segments spans residues 125-145 (IIGI…VAVL) and 162-182 (FSLC…GLAI). The segment at 253 to 282 (DESGSEVSSEDEESDQETLLRNRKMPTNSK) is disordered. 2 helical membrane-spanning segments follow: residues 326–346 (LISA…IVGS) and 366–386 (IPTL…MCVL).

The protein localises to the host membrane. In Magallana gigas (Pacific oyster), this protein is Putative transmembrane protein ORF103.